A 419-amino-acid chain; its full sequence is L-rhamnose isomerase (419 aa).

Positions 262, 294, and 296 each coordinate Mn(2+).

This sequence belongs to the rhamnose isomerase family. Homotetramer. The cofactor is Mn(2+).

Its subcellular location is the cytoplasm. It catalyses the reaction L-rhamnopyranose = L-rhamnulose. The protein operates within carbohydrate degradation; L-rhamnose degradation; glycerone phosphate from L-rhamnose: step 1/3. In terms of biological role, catalyzes the interconversion of L-rhamnose and L-rhamnulose. The chain is L-rhamnose isomerase from Shigella boydii serotype 4 (strain Sb227).